The primary structure comprises 356 residues: MDSTYIGSYGRLRVYQTEFFSRQQIDQMLSMTDPKDVSAFLYNGPYREDYDSLSAVFKDPDLTEMAINRHMVRNNRLVLFAIPPLAKNAVVAYLSKWDIENIKTVISAKFLGHGIREAEPFLVSFRDIPLGIMSGTLTNEDYRNMINLPNIEAILNYLARFGYGTYMMQFLEDYRKTGDISPMLYSLDRYYYMNLLSALKYYRGDEAPVLNYVRSDIDRQNIVTMLKGKVLKIPFERMSSGIIDGGNIGVNRLREIYSSQDAVSVADALKQYYDLEEPKKKYMETGDLYHFDIAIRNIIARRFLDTMSMLPLSLDSLFYFILRSEIERHNLRTIYLSKVNGMPREITESLLITEMM.

This sequence belongs to the V-ATPase V0D/AC39 subunit family. Has multiple subunits with at least A(3), B(3), C, D, E, F, H, I and proteolipid K(x).

The protein localises to the cell membrane. Functionally, component of the A-type ATP synthase that produces ATP from ADP in the presence of a proton gradient across the membrane. The sequence is that of A-type ATP synthase subunit C from Thermoplasma acidophilum (strain ATCC 25905 / DSM 1728 / JCM 9062 / NBRC 15155 / AMRC-C165).